Consider the following 535-residue polypeptide: uncharacterized protein (535 aa).

6 helical membrane passes run 63 to 83, 90 to 110, 143 to 163, 168 to 188, 226 to 246, and 258 to 278; these read LTGI…PSIY, VTFG…TYWI, VAAV…TLYG, VFVT…ATNC, SLGS…VLLV, and VLIL…ILAW. In terms of domain architecture, HAMP spans 279–330; it reads LTAAPVRVVRAALKRVEQGDLRGDLVVFDGTELGELQRGFNAMVNGLRERER. Residues 362–486 enclose the Guanylate cyclase domain; that stretch reads AVVFVDIVGS…KPVNQAARLC (125 aa).

This sequence belongs to the adenylyl cyclase class-3 family.

The protein resides in the cell membrane. This is an uncharacterized protein from Mycobacterium tuberculosis (strain ATCC 25618 / H37Rv).